A 930-amino-acid chain; its full sequence is G patch domain-containing protein TGH (930 aa).

Residue K25 forms a Glycyl lysine isopeptide (Lys-Gly) (interchain with G-Cter in ubiquitin) linkage. A disordered region spans residues 76-152 (GWAPQSFTSS…PSAIPGPVPD (77 aa)). The G-patch domain occupies 159–199 (SESIGVKLLLKMGWRRGHSIKEVRASSDARREARKAFLAFY). An SURP motif repeat occupies 405-447 (LIEGFATFVSRCGKLYEDLSREKNQSNQLFDFLREGNGHDYYA). Disordered stretches follow at residues 478–508 (AETR…GSFQ), 687–751 (RQVS…NEAA), and 773–930 (FEVP…RRRD). Over residues 489–498 (PLQRSLKETD) the composition is skewed to basic and acidic residues. Polar residues predominate over residues 499 to 508 (TSASSGGSFQ). Residues 701 to 711 (IEEPEVEVEVE) show a composition bias toward acidic residues. Over residues 779–808 (EEIKSRSKPEDSSDKRLDRPGLKEKVEEKT) the composition is skewed to basic and acidic residues. The span at 848–857 (RRKRYNKKDR) shows a compositional bias: basic residues. Over residues 858–877 (HRNDSESDSSSDYHSRDKQG) the composition is skewed to basic and acidic residues. A compositionally biased stretch (basic residues) spans 892–908 (RSSHKKHSKHRRTKKSS). Residues 913–923 (SSDEEQKESRR) are compositionally biased toward basic and acidic residues.

In terms of tissue distribution, expressed in vasculature of cotyledons and leaves, young meristematic tissues, trichomes and pistils.

It localises to the nucleus speckle. It is found in the nucleus. The protein localises to the nucleoplasm. Its function is as follows. Functions as a component of microRNA (miRNA) and small interfering RNA (siRNA) biogenesis. May assist DCL1 and DCL4 to efficiently process and/or recruit the precursors of miRNAs and siRNAs. In the miRNA biogenesis pathway, associates with the DCL1 complex that processes primary miRNAs (pri-miRNAs) into miRNAs. Binds pri-miRNAs and precursor miRNAs (pre-miRNAs). Is required for the interaction between pri-miRNAs and DRB1. Required for general proper plant growth and, in particular, initiation of vascular development. Interacts genetically with AMP1, a glutamate carboxypeptidase involved in the regulation of meristem function. This is G patch domain-containing protein TGH from Arabidopsis thaliana (Mouse-ear cress).